Consider the following 225-residue polypeptide: MASTALSTASNPTQLCRSRASLGKPVKGLGFGRERVPRTATTITCQAASSIPADRVPDMGKRQLMNLLLLGAISLPTVGMLVPYGAFFIPAGSGNAGGGQVAKDKLGNDVLAEEWLKTHGPNDRTLTQGLKGDPTYLVVEADKTLATYGINAVCTHLGCVVPWNAAENKFICPCHGSQYNNQGRVVRGPAPLSLALVHADVDDGKVLFVPWVETDFRTGDNPWWA.

Residues 1 to 46 (MASTALSTASNPTQLCRSRASLGKPVKGLGFGRERVPRTATTITCQ) constitute a chloroplast transit peptide. The helical transmembrane segment at 69 to 89 (LLGAISLPTVGMLVPYGAFFI) threads the bilayer. Positions 112–208 (AEEWLKTHGP…ADVDDGKVLF (97 aa)) constitute a Rieske domain. Residues C154, H156, C172, and H175 each contribute to the [2Fe-2S] cluster site. Cysteines 159 and 174 form a disulfide.

The protein belongs to the Rieske iron-sulfur protein family. As to quaternary structure, the 4 large subunits of the cytochrome b6-f complex are cytochrome b6, subunit IV (17 kDa polypeptide, petD), cytochrome f and the Rieske protein, while the 4 small subunits are petG, petL, petM and petN. The complex functions as a dimer. Requires [2Fe-2S] cluster as cofactor.

It is found in the plastid. The protein resides in the chloroplast thylakoid membrane. The catalysed reaction is 2 oxidized [plastocyanin] + a plastoquinol + 2 H(+)(in) = 2 reduced [plastocyanin] + a plastoquinone + 4 H(+)(out). Functionally, component of the cytochrome b6-f complex, which mediates electron transfer between photosystem II (PSII) and photosystem I (PSI), cyclic electron flow around PSI, and state transitions. The sequence is that of Cytochrome b6-f complex iron-sulfur subunit, chloroplastic (petC) from Oryza sativa subsp. japonica (Rice).